Here is a 79-residue protein sequence, read N- to C-terminus: Cyclin-dependent kinases regulatory subunit 2 (79 aa).

Position 4 is an N6-acetyllysine (Lys4).

This sequence belongs to the CKS family. In terms of assembly, forms a homohexamer that can probably bind six kinase subunits.

Its function is as follows. Binds to the catalytic subunit of the cyclin dependent kinases and is essential for their biological function. The polypeptide is Cyclin-dependent kinases regulatory subunit 2 (Cks2) (Mus musculus (Mouse)).